A 1118-amino-acid polypeptide reads, in one-letter code: MHWIATRNAVVSFPKWRFFFRSSYRTYSSLKPSSPILLNRRYSEGISCLRDGKSLKRITTASKKVKTSSDVLTDKDLSHLVWWKERLQTCKKPSTLQLIERLMYTNLLGLDPSLRNGSLKDGNLNWEMLQFKSRFPREVLLCRVGEFYEAIGIDACILVEYAGLNPFGGLRSDSIPKAGCPIMNLRQTLDDLTRNGYSVCIVEEVQGPTPARSRKGRFISGHAHPGSPYVYGLVGVDHDLDFPDPMPVVGISRSARGYCMISIFETMKAYSLDDGLTEEALVTKLRTRRCHHLFLHASLRHNASGTCRWGEFGEGGLLWGECSSRNFEWFEGDTLSELLSRVKDVYGLDDEVSFRNVNVPSKNRPRPLHLGTATQIGALPTEGIPCLLKVLLPSTCSGLPSLYVRDLLLNPPAYDIALKIQETCKLMSTVTCSIPEFTCVSSAKLVKLLEQREANYIEFCRIKNVLDDVLHMHRHAELVEILKLLMDPTWVATGLKIDFDTFVNECHWASDTIGEMISLDENESHQNVSKCDNVPNEFFYDMESSWRGRVKGIHIEEEITQVEKSAEALSLAVAEDFHPIISRIKATTASLGGPKGEIAYAREHESVWFKGKRFTPSIWAGTAGEDQIKQLKPALDSKGKKVGEEWFTTPKVEIALVRYHEASENAKARVLELLRELSVKLQTKINVLVFASMLLVISKALFSHACEGRRRKWVFPTLVGFSLDEGAKPLDGASRMKLTGLSPYWFDVSSGTAVHNTVDMQSLFLLTGPNGGGKSSLLRSICAAALLGISGLMVPAESACIPHFDSIMLHMKSYDSPVDGKSSFQVEMSEIRSIVSQATSRSLVLIDEICRGTETAKGTCIAGSVVESLDTSGCLGIVSTHLHGIFSLPLTAKNITYKAMGAENVEGQTKPTWKLTDGVCRESLAFETAKREGVPESVIQRAEALYLSVYAKDASAEVVKPDQIITSSNNDQQIQKPVSSERSLEKDLAKAIVKICGKKMIEPEAIECLSIGARELPPPSTVGSSCVYVMRRPDKRLYIGQTDDLEGRIRAHRAKEGLQGSSFLYLMVQGKSMACQLETLLINQLHEQGYSLANLADGKHRNFGTSSSLSTSDVVSIL.

768–775 (GPNGGGKS) lines the ATP pocket.

The protein belongs to the DNA mismatch repair MutS family.

It is found in the mitochondrion. Its subcellular location is the plastid. It localises to the chloroplast. DNA mismatch repair protein specifically involved in maintenance of mitochondrial genome configuration by controlling specific rearranged portion. Functions by suppressing asymmetric recombination at some repeat pairs. The sequence is that of DNA mismatch repair protein MSH1, mitochondrial (MSH1) from Arabidopsis thaliana (Mouse-ear cress).